We begin with the raw amino-acid sequence, 338 residues long: Probable cytosolic iron-sulfur protein assembly protein Ciao1 (338 aa).

WD repeat units follow at residues 12–51 (GHRG…RWVP), 58–97 (GHTR…FECN), 102–141 (GHEN…EYEC), 147–186 (THSQ…SDWS), 193–232 (SHDS…NEFG), 234–252 (ACPD…LSGF), 253–291 (HSRA…PANE), and 302–338 (AHSQ…EDDE).

Belongs to the WD repeat CIA1 family.

Its function is as follows. Essential component of the cytosolic iron-sulfur (Fe/S) protein assembly machinery. Required for the maturation of extramitochondrial Fe/S proteins. This chain is Probable cytosolic iron-sulfur protein assembly protein Ciao1, found in Culex quinquefasciatus (Southern house mosquito).